Here is a 414-residue protein sequence, read N- to C-terminus: CCA-adding enzyme (414 aa).

2 residues coordinate ATP: Gly-8 and Arg-11. Positions 8 and 11 each coordinate CTP. Asp-21 and Asp-23 together coordinate Mg(2+). The ATP site is built by Arg-91, Arg-137, and Arg-140. 3 residues coordinate CTP: Arg-91, Arg-137, and Arg-140.

Belongs to the tRNA nucleotidyltransferase/poly(A) polymerase family. Bacterial CCA-adding enzyme type 2 subfamily. It depends on Mg(2+) as a cofactor.

It catalyses the reaction a tRNA precursor + 2 CTP + ATP = a tRNA with a 3' CCA end + 3 diphosphate. The enzyme catalyses a tRNA with a 3' CCA end + 2 CTP + ATP = a tRNA with a 3' CCACCA end + 3 diphosphate. Its function is as follows. Catalyzes the addition and repair of the essential 3'-terminal CCA sequence in tRNAs without using a nucleic acid template. Adds these three nucleotides in the order of C, C, and A to the tRNA nucleotide-73, using CTP and ATP as substrates and producing inorganic pyrophosphate. tRNA 3'-terminal CCA addition is required both for tRNA processing and repair. Also involved in tRNA surveillance by mediating tandem CCA addition to generate a CCACCA at the 3' terminus of unstable tRNAs. While stable tRNAs receive only 3'-terminal CCA, unstable tRNAs are marked with CCACCA and rapidly degraded. The sequence is that of CCA-adding enzyme from Buchnera aphidicola subsp. Acyrthosiphon pisum (strain 5A).